A 399-amino-acid polypeptide reads, in one-letter code: RNA polymerase sigma factor SigA1 (399 aa).

The segment at 1 to 73 (MTQLISIDKE…DEDSVGEDED (73 aa)) is disordered. Residues 60–73 (DAIDDEDSVGEDED) show a composition bias toward acidic residues. The sigma-70 factor domain-2 stretch occupies residues 167–237 (MVQSNLRLVV…TRAIADQSRT (71 aa)). The Interaction with polymerase core subunit RpoC signature appears at 191–194 (DLIQ). The tract at residues 246 to 321 (ETISRIKKTT…EADGETPEDE (76 aa)) is sigma-70 factor domain-3. The tract at residues 334 to 387 (VLSTLSPRERDVLRLRYGLDDGRMKTLEEIGQLFNVTRERIRQIEAKALRKLRH) is sigma-70 factor domain-4. The H-T-H motif DNA-binding region spans 360 to 379 (LEEIGQLFNVTRERIRQIEA).

It belongs to the sigma-70 factor family. RpoD/SigA subfamily. In terms of assembly, interacts transiently with the RNA polymerase catalytic core.

It localises to the cytoplasm. In terms of biological role, sigma factors are initiation factors that promote the attachment of RNA polymerase to specific initiation sites and are then released. This sigma factor is the primary sigma factor during exponential growth. This is RNA polymerase sigma factor SigA1 from Synechococcus elongatus (strain ATCC 33912 / PCC 7942 / FACHB-805) (Anacystis nidulans R2).